A 403-amino-acid chain; its full sequence is NADH-quinone oxidoreductase subunit D (403 aa).

Belongs to the complex I 49 kDa subunit family. As to quaternary structure, NDH-1 is composed of 14 different subunits. Subunits NuoB, C, D, E, F, and G constitute the peripheral sector of the complex.

It localises to the cell inner membrane. The enzyme catalyses a quinone + NADH + 5 H(+)(in) = a quinol + NAD(+) + 4 H(+)(out). In terms of biological role, NDH-1 shuttles electrons from NADH, via FMN and iron-sulfur (Fe-S) centers, to quinones in the respiratory chain. The immediate electron acceptor for the enzyme in this species is believed to be ubiquinone. Couples the redox reaction to proton translocation (for every two electrons transferred, four hydrogen ions are translocated across the cytoplasmic membrane), and thus conserves the redox energy in a proton gradient. This Pelobacter propionicus (strain DSM 2379 / NBRC 103807 / OttBd1) protein is NADH-quinone oxidoreductase subunit D.